The primary structure comprises 106 residues: Small ribosomal subunit protein uS10 (106 aa).

The protein belongs to the universal ribosomal protein uS10 family. In terms of assembly, part of the 30S ribosomal subunit.

Involved in the binding of tRNA to the ribosomes. The sequence is that of Small ribosomal subunit protein uS10 from Pyrobaculum aerophilum (strain ATCC 51768 / DSM 7523 / JCM 9630 / CIP 104966 / NBRC 100827 / IM2).